Consider the following 211-residue polypeptide: LexA repressor (211 aa).

Residues Gln-27–Asp-47 constitute a DNA-binding region (H-T-H motif). Residues Ser-131 and Lys-168 each act as for autocatalytic cleavage activity in the active site.

The protein belongs to the peptidase S24 family. Homodimer.

The enzyme catalyses Hydrolysis of Ala-|-Gly bond in repressor LexA.. Its function is as follows. Represses a number of genes involved in the response to DNA damage (SOS response), including recA and lexA. In the presence of single-stranded DNA, RecA interacts with LexA causing an autocatalytic cleavage which disrupts the DNA-binding part of LexA, leading to derepression of the SOS regulon and eventually DNA repair. This chain is LexA repressor, found in Xylella fastidiosa (strain 9a5c).